Here is a 361-residue protein sequence, read N- to C-terminus: Carbon monoxide-induced hydrogenase (361 aa).

Ni(2+)-binding residues include cysteine 64, cysteine 67, cysteine 355, and cysteine 358.

The protein to E.coli formate hydrogenlyase hydrogenase isozyme 3 and to bovine mitochondrial NADH-ubiquinone oxidoreductase. Ni(2+) is required as a cofactor.

Functionally, the carbon monoxide dehydrogenase (CODH) oxidizes carbon monoxide coupled, via CooF, to the reduction of a hydrogen cation by a hydrogenase (probably CooH). The sequence is that of Carbon monoxide-induced hydrogenase (cooH) from Rhodospirillum rubrum.